A 119-amino-acid polypeptide reads, in one-letter code: Large ribosomal subunit protein bL20 (119 aa).

It belongs to the bacterial ribosomal protein bL20 family.

Functionally, binds directly to 23S ribosomal RNA and is necessary for the in vitro assembly process of the 50S ribosomal subunit. It is not involved in the protein synthesizing functions of that subunit. The protein is Large ribosomal subunit protein bL20 of Treponema denticola (strain ATCC 35405 / DSM 14222 / CIP 103919 / JCM 8153 / KCTC 15104).